A 147-amino-acid chain; its full sequence is MKLHELKSAPKSRNHKAKVVGRGHGSGLGKTSGRGQKGQKARKSGRTRPGFEGGQTPLYRRLPKFGFQTVGFKKQTLSVSLDIIAKLNETTIDRELLVKHGIISSKTNEPIKVIGNKIDKKIHLKINKISEGAKKAIQSAGGSIELI.

Residues 1–57 (MKLHELKSAPKSRNHKAKVVGRGHGSGLGKTSGRGQKGQKARKSGRTRPGFEGGQTP) are disordered. Basic residues predominate over residues 10-21 (PKSRNHKAKVVG). Over residues 22–36 (RGHGSGLGKTSGRGQ) the composition is skewed to gly residues. The span at 37 to 46 (KGQKARKSGR) shows a compositional bias: basic residues.

This sequence belongs to the universal ribosomal protein uL15 family. As to quaternary structure, part of the 50S ribosomal subunit.

In terms of biological role, binds to the 23S rRNA. The sequence is that of Large ribosomal subunit protein uL15 from Mycoplasmoides gallisepticum (strain R(low / passage 15 / clone 2)) (Mycoplasma gallisepticum).